A 272-amino-acid chain; its full sequence is Phosphate import ATP-binding protein PstB (272 aa).

The 242-residue stretch at 26–267 (LDIKNLDLYY…PSEKQTEDYI (242 aa)) folds into the ABC transporter domain. 58-65 (GPSGCGKS) serves as a coordination point for ATP.

It belongs to the ABC transporter superfamily. Phosphate importer (TC 3.A.1.7) family. As to quaternary structure, the complex is composed of two ATP-binding proteins (PstB), two transmembrane proteins (PstC and PstA) and a solute-binding protein (PstS).

It localises to the cell inner membrane. It carries out the reaction phosphate(out) + ATP + H2O = ADP + 2 phosphate(in) + H(+). In terms of biological role, part of the ABC transporter complex PstSACB involved in phosphate import. Responsible for energy coupling to the transport system. The sequence is that of Phosphate import ATP-binding protein PstB from Idiomarina loihiensis (strain ATCC BAA-735 / DSM 15497 / L2-TR).